Reading from the N-terminus, the 183-residue chain is Segregation and condensation protein B (183 aa).

This sequence belongs to the ScpB family. Homodimer. Homodimerization may be required to stabilize the binding of ScpA to the Smc head domains. Component of a cohesin-like complex composed of ScpA, ScpB and the Smc homodimer, in which ScpA and ScpB bind to the head domain of Smc. The presence of the three proteins is required for the association of the complex with DNA.

The protein resides in the cytoplasm. In terms of biological role, participates in chromosomal partition during cell division. May act via the formation of a condensin-like complex containing Smc and ScpA that pull DNA away from mid-cell into both cell halves. This chain is Segregation and condensation protein B, found in Streptococcus pyogenes serotype M1.